The following is a 232-amino-acid chain: Thiamine import ATP-binding protein ThiQ (232 aa).

Residues L2–I230 enclose the ABC transporter domain. G32 to S39 provides a ligand contact to ATP.

Belongs to the ABC transporter superfamily. Thiamine importer (TC 3.A.1.19.1) family. As to quaternary structure, the complex is composed of two ATP-binding proteins (ThiQ), two transmembrane proteins (ThiP) and a solute-binding protein (ThiB).

The protein localises to the cell inner membrane. It carries out the reaction thiamine(out) + ATP + H2O = thiamine(in) + ADP + phosphate + H(+). Functionally, part of the ABC transporter complex ThiBPQ involved in thiamine import. Responsible for energy coupling to the transport system. The chain is Thiamine import ATP-binding protein ThiQ from Escherichia coli O157:H7.